A 679-amino-acid chain; its full sequence is Methionine--tRNA ligase (679 aa).

The 'HIGH' region motif lies at 15–25 (PYANGSIHLGH). Residues cysteine 146, cysteine 149, cysteine 159, and cysteine 162 each contribute to the Zn(2+) site. Residues 332-336 (KMSKS) carry the 'KMSKS' region motif. Lysine 335 contacts ATP. The tRNA-binding domain occupies 577 to 679 (DFAKVDMRVA…AGALPGMPVK (103 aa)).

The protein belongs to the class-I aminoacyl-tRNA synthetase family. MetG type 1 subfamily. As to quaternary structure, homodimer. It depends on Zn(2+) as a cofactor.

The protein resides in the cytoplasm. The enzyme catalyses tRNA(Met) + L-methionine + ATP = L-methionyl-tRNA(Met) + AMP + diphosphate. Functionally, is required not only for elongation of protein synthesis but also for the initiation of all mRNA translation through initiator tRNA(fMet) aminoacylation. The polypeptide is Methionine--tRNA ligase (Sodalis glossinidius (strain morsitans)).